A 308-amino-acid polypeptide reads, in one-letter code: Putative integrase/recombinase y4qK (308 aa).

A Core-binding (CB) domain is found at 15 to 97 (LVMTPLRQRM…ALRFFFSVTL (83 aa)). In terms of domain architecture, Tyr recombinase spans 115–288 (KLPIILSPDE…ATNKVCATSS (174 aa)). Catalysis depends on residues R150, K175, H240, R243, and H266. Y275 serves as the catalytic O-(3'-phospho-DNA)-tyrosine intermediate.

Belongs to the 'phage' integrase family.

Its function is as follows. May function as an integrase. This is Putative integrase/recombinase y4qK from Sinorhizobium fredii (strain NBRC 101917 / NGR234).